The primary structure comprises 420 residues: Gamma-glutamyl phosphate reductase (420 aa).

The protein belongs to the gamma-glutamyl phosphate reductase family.

The protein localises to the cytoplasm. The enzyme catalyses L-glutamate 5-semialdehyde + phosphate + NADP(+) = L-glutamyl 5-phosphate + NADPH + H(+). It participates in amino-acid biosynthesis; L-proline biosynthesis; L-glutamate 5-semialdehyde from L-glutamate: step 2/2. Functionally, catalyzes the NADPH-dependent reduction of L-glutamate 5-phosphate into L-glutamate 5-semialdehyde and phosphate. The product spontaneously undergoes cyclization to form 1-pyrroline-5-carboxylate. The sequence is that of Gamma-glutamyl phosphate reductase from Streptococcus pneumoniae (strain JJA).